We begin with the raw amino-acid sequence, 210 residues long: Hydrogenase expression/formation protein HupD (210 aa).

Positions 22, 68, and 99 each coordinate Ni(2+).

The protein belongs to the peptidase A31 family.

Not known. Could be involved in the processing of hydrogenase. This chain is Hydrogenase expression/formation protein HupD (hupD), found in Rhodobacter capsulatus (Rhodopseudomonas capsulata).